Consider the following 822-residue polypeptide: Ribonucleoside-diphosphate reductase large subunit (822 aa).

Substrate-binding positions include Thr-249, 264–265 (SC), Gly-295, 470–474 (NLCTE), and 651–655 (PTAAS). A disulfide bond links Cys-265 and Cys-487. Asn-470 serves as the catalytic Proton acceptor. The active-site Cysteine radical intermediate is the Cys-472. Catalysis depends on Glu-474, which acts as the Proton acceptor.

The protein belongs to the ribonucleoside diphosphate reductase large chain family. Heterotetramer composed of a homodimer of the large subunit (R1) and a homodimer of the small subunit (R2). Larger multisubunit protein complex are also active, composed of (R1)n(R2)n.

It carries out the reaction a 2'-deoxyribonucleoside 5'-diphosphate + [thioredoxin]-disulfide + H2O = a ribonucleoside 5'-diphosphate + [thioredoxin]-dithiol. Its function is as follows. Ribonucleoside-diphosphate reductase holoenzyme provides the precursors necessary for viral DNA synthesis. Allows virus growth in non-dividing cells, as well as reactivation from latency in infected hosts. Catalyzes the biosynthesis of deoxyribonucleotides from the corresponding ribonucleotides. This chain is Ribonucleoside-diphosphate reductase large subunit, found in Gallus gallus (Chicken).